A 274-amino-acid polypeptide reads, in one-letter code: Transmembrane O-methyltransferase (274 aa).

Residues 14-34 (VGTMSPAIALAFLPLVVTLLV) traverse the membrane as a helical segment. S-adenosyl-L-methionine contacts are provided by residues glutamate 120, 122–123 (GT), serine 128, glutamate 146, and serine 176.

It belongs to the class I-like SAM-binding methyltransferase superfamily. Cation-dependent O-methyltransferase family. In terms of assembly, interacts with LHFPL5, PCDH15, TMC1, TMC2 and TMIE. Interacts directly with TMC1. The interaction of TOMT with TMC1 and TMC2 is required for the transportation of TMC1/2 into the stereocilia of hair cells.

It is found in the membrane. The protein localises to the cytoplasm. The protein resides in the endoplasmic reticulum. It carries out the reaction a catechol + S-adenosyl-L-methionine = a guaiacol + S-adenosyl-L-homocysteine + H(+). Functionally, catalyzes the O-methylation, and thereby the inactivation, of catecholamine neurotransmitters and catechol hormones. Required for auditory function. Component of the cochlear hair cell's mechanotransduction (MET) machinery. Involved in the assembly of the asymmetric tip-link MET complex. Required for transportation of TMC1 and TMC2 proteins into the mechanically sensitive stereocilia of the hair cells. The function in MET is independent of the enzymatic activity. The protein is Transmembrane O-methyltransferase of Propithecus coquereli (Coquerel's sifaka).